Consider the following 310-residue polypeptide: uncharacterized protein (310 aa).

This is an uncharacterized protein from Methanocaldococcus jannaschii (strain ATCC 43067 / DSM 2661 / JAL-1 / JCM 10045 / NBRC 100440) (Methanococcus jannaschii).